The following is a 380-amino-acid chain: Omega-3 fatty acid desaturase, endoplasmic reticulum (380 aa).

A helical transmembrane segment spans residues 59-78; the sequence is VLVVTALAASAISFNSWFFW. Residues 97 to 101 carry the Histidine box-1 motif; it reads HDCGH. The Histidine box-2 signature appears at 133-137; sequence HRTHH. 2 helical membrane passes run 208 to 231 and 238 to 256; these read GVVT…LTIG and LYGV…VTYL. The Histidine box-3 motif lies at 300 to 304; that stretch reads HVIHH.

It belongs to the fatty acid desaturase type 1 family.

It is found in the endoplasmic reticulum membrane. The protein operates within lipid metabolism; polyunsaturated fatty acid biosynthesis. Its function is as follows. Microsomal (ER) omega-3 fatty acid desaturase introduces the third double bond in the biosynthesis of 18:3 fatty acids, important constituents of plant membranes. It is thought to use cytochrome b5 as an electron donor and to act on fatty acids esterified to phosphatidylcholine and, possibly, other phospholipids. This Vigna radiata var. radiata (Mung bean) protein is Omega-3 fatty acid desaturase, endoplasmic reticulum (ARG1).